Consider the following 307-residue polypeptide: Mitogen-activated protein kinase kinase 7 (307 aa).

In terms of domain architecture, Protein kinase spans 45–303 (VEKLHVLGRG…ASQLLGHPFL (259 aa)). Residues 51-59 (LGRGSSGIV) and Lys-74 each bind ATP. Residue Asp-165 is the Proton acceptor of the active site. Ser-193 and Ser-199 each carry phosphoserine. A Phosphothreonine modification is found at Thr-203.

Belongs to the protein kinase superfamily. STE Ser/Thr protein kinase family. MAP kinase kinase subfamily. Interacts with MPK15. In terms of processing, phosphorylation at Ser-193 and Ser-199 by MAP kinase kinase kinases positively regulates kinase activity. In terms of tissue distribution, expressed in all tissues, with a relatively higher level in leaves and lower level in roots and flowers.

It carries out the reaction L-seryl-[protein] + ATP = O-phospho-L-seryl-[protein] + ADP + H(+). The enzyme catalyses L-threonyl-[protein] + ATP = O-phospho-L-threonyl-[protein] + ADP + H(+). The catalysed reaction is L-tyrosyl-[protein] + ATP = O-phospho-L-tyrosyl-[protein] + ADP + H(+). In terms of biological role, may function as a negative regulator of polar auxin transport. Positively regulates plant basal and systemic acquired resistance (SAR). Activates MPK3 and MPK6 in vitro. The polypeptide is Mitogen-activated protein kinase kinase 7 (MKK7) (Arabidopsis thaliana (Mouse-ear cress)).